Reading from the N-terminus, the 486-residue chain is Cardiolipin synthase A (486 aa).

The next 2 membrane-spanning stretches (helical) occupy residues 3 to 23 (TFYT…IAGV) and 38 to 58 (MAWL…YLSF). PLD phosphodiesterase domains lie at 219-246 (MDLR…VDPR) and 399-426 (EDGL…DMRS). Catalysis depends on residues H224, K226, D231, H404, K406, and D411.

It belongs to the phospholipase D family. Cardiolipin synthase subfamily. ClsA sub-subfamily.

It localises to the cell inner membrane. It catalyses the reaction 2 a 1,2-diacyl-sn-glycero-3-phospho-(1'-sn-glycerol) = a cardiolipin + glycerol. Catalyzes the reversible phosphatidyl group transfer from one phosphatidylglycerol molecule to another to form cardiolipin (CL) (diphosphatidylglycerol) and glycerol. The chain is Cardiolipin synthase A from Serratia proteamaculans (strain 568).